A 1920-amino-acid polypeptide reads, in one-letter code: rRNA biogenesis protein RRP5 (1920 aa).

A disordered region spans residues 1–65 (MVVPQKKFAN…GTSLSKKERE (65 aa)). 15 consecutive S1 motif domains span residues 128–210 (GMKL…LSLR), 226–291 (GMVF…LSSD), 314–384 (GMMV…LTLS), 400–473 (GDIF…GTLK), 490–557 (GMVT…VTYK), 577–646 (GLVT…LSFM), 661–733 (GSIV…LSSK), 753–822 (NSVV…LSLK), 866–930 (GSLI…LSLR), 958–1031 (EVHQ…LLLD), 1054–1129 (GSVV…LSVK), 1153–1224 (GQCV…LVQR), 1260–1334 (GDIL…LSLR), 1369–1438 (DMGV…VTLK), and 1459–1529 (GDMI…LGMK). 2 disordered regions span residues 1535–1555 (NGDD…ECDP) and 1605–1652 (TDFD…LEHH). The segment covering 1620–1652 (NKDEKSKRREKQKDKEEREKKIQAAEGRLLEHH) has biased composition (basic and acidic residues). 6 HAT repeats span residues 1651 to 1683 (HHAP…FMLS), 1685 to 1722 (ADIE…LENE), 1726 to 1758 (PPEE…YERT), 1759 to 1791 (EQYK…SSLK), 1828 to 1860 (GVAD…QEIR), and 1862 to 1897 (GEDD…YEKS).

Highly expressed in flowers and at lower levels in roots, leaves, stems and siliques.

The protein localises to the nucleus. The protein resides in the nucleolus. In terms of biological role, involved in the biogenesis of ribosomal RNA (rRNA). Required for the formation of 5.8S rRNA. Required for normal development of female gametophytes. The chain is rRNA biogenesis protein RRP5 from Arabidopsis thaliana (Mouse-ear cress).